We begin with the raw amino-acid sequence, 359 residues long: AA9 family lytic polysaccharide monooxygenase B (359 aa).

The N-terminal stretch at 1–18 (MQLFTSFSLLAVASFASA) is a signal peptide. Cu(2+) is bound by residues His19 and His102. 2 disulfide bridges follow: Cys72/Cys190 and Cys113/Cys117. Asn150 is a glycosylation site (N-linked (GlcNAc...) asparagine). Positions 176 and 185 each coordinate O2. Tyr187 is a Cu(2+) binding site. The tract at residues 241 to 310 (GGSPGNSAEP…STNINPTSLK (70 aa)) is disordered. Residues 245 to 254 (GNSAEPQPQH) show a composition bias toward polar residues. The span at 255–304 (TSTAVSTAKTASTSSLTTSVTITSQAPSNTANPPQSITTTTTPKPQSTNI) shows a compositional bias: low complexity. Asn345 is a glycosylation site (N-linked (GlcNAc...) asparagine).

This sequence belongs to the polysaccharide monooxygenase AA9 family. Requires Cu(2+) as cofactor.

Its subcellular location is the secreted. It carries out the reaction [(1-&gt;4)-beta-D-glucosyl]n+m + reduced acceptor + O2 = 4-dehydro-beta-D-glucosyl-[(1-&gt;4)-beta-D-glucosyl]n-1 + [(1-&gt;4)-beta-D-glucosyl]m + acceptor + H2O.. Lytic polysaccharide monooxygenase (LPMO) that depolymerizes crystalline and amorphous polysaccharides via the oxidation of scissile alpha- or beta-(1-4)-glycosidic bonds, yielding C1 and C4 oxidation products. Catalysis by LPMOs requires the reduction of the active-site copper from Cu(II) to Cu(I) by a reducing agent and H(2)O(2) or O(2) as a cosubstrate. Active on cellulose and on xyloglucan for deconstruction of plant biomass. This chain is AA9 family lytic polysaccharide monooxygenase B, found in Geotrichum candidum (Oospora lactis).